A 1909-amino-acid polypeptide reads, in one-letter code: Plexin-B3 (1909 aa).

The N-terminal stretch at 1 to 44 is a signal peptide; that stretch reads MCHAAQETPLLHHFMAPVMARWPPFGLCLLLLLLSPPPLPLTGA. Residues 45-471 form the Sema domain; the sequence is HRFSAPNTTL…TAHQVDRIPV (427 aa). Over 45–1255 the chain is Extracellular; the sequence is HRFSAPNTTL…PLSAFPVEAQ (1211 aa). N-linked (GlcNAc...) asparagine glycosylation occurs at Asn-51. Intrachain disulfides connect Cys-98–Cys-107 and Cys-132–Cys-140. N-linked (GlcNAc...) asparagine glycosylation occurs at Asn-231. Disulfide bonds link Cys-267-Cys-370, Cys-283-Cys-315, Cys-333-Cys-357, Cys-474-Cys-491, Cys-480-Cys-525, Cys-483-Cys-500, Cys-494-Cys-506, and Cys-562-Cys-580. Positions 473 to 526 constitute a PSI 1 domain; the sequence is ACPQFPDCASCLQAQDPLCGWCVLQGRCTRKGQCGRAGQLNQWLWSYEEDSHCL. N-linked (GlcNAc...) asparagine glycosylation occurs at Asn-615. 2 consecutive PSI domains span residues 620–682 and 787–833; these read DCSA…GACP and DCAM…LLCP. N-linked (GlcNAc...) asparagine glycans are attached at residues Asn-802, Asn-900, Asn-957, Asn-1101, and Asn-1218. IPT/TIG domains lie at 835–925, 927–1012, 1015–1145, and 1159–1244; these read PSID…FTYQ, PVLL…FRYT, PQLV…FLYQ, and ARPY…YEAE. Residues 1256–1276 form a helical membrane-spanning segment; the sequence is AGVGMGAAVLIAAVLLLTLMY. At 1277-1909 the chain is on the cytoplasmic side; the sequence is RHKSKQALRD…ALVENKVTDL (633 aa).

Belongs to the plexin family. Interacts (via cytoplasmic domain) with RAC1 and ARHGDIA. Binds MET and MST1R. Interacts (via cytoplasmic domain) with FSCN1. Interacts with RIT2/RIN. May form homodimers (via Sema domain). Expression detected in Purkinje and granular cells in cerebellum, and in brain neocortex but not in corpus callosum. Expressed in glioma cells and embryonic kidney cells (at protein level). Expressed in brain, liver, pancreas and placenta, with weak expression detected also in lung and kidney. Expressed in several glioma cell lines.

It is found in the cell membrane. In terms of biological role, receptor for SEMA5A that plays a role in axon guidance, invasive growth and cell migration. Stimulates neurite outgrowth and mediates Ca(2+)/Mg(2+)-dependent cell aggregation. In glioma cells, SEMA5A stimulation of PLXNB3 results in the disassembly of F-actin stress fibers, disruption of focal adhesions and cellular collapse as well as inhibition of cell migration and invasion through ARHGDIA-mediated inactivation of RAC1. This chain is Plexin-B3 (PLXNB3), found in Homo sapiens (Human).